The following is a 617-amino-acid chain: Kelch-like protein diablo (617 aa).

The disordered stretch occupies residues 1–55 (MGDPLLPGSTGLGSGGTAAATGGTGTTGTGLGSGGTSGTERPPSPARLTHTSEKH). Positions 10–37 (TGLGSGGTAAATGGTGTTGTGLGSGGTS) are enriched in gly residues. One can recognise a BTB domain in the interval 73-140 (CDVVLNVGGR…CYTAHIIVEE (68 aa)). The BACK domain maps to 175-277 (CLGIRAFADT…SPKFLVGTVG (103 aa)). Kelch repeat units lie at residues 324 to 370 (VLFA…VLND), 372 to 418 (LYAV…VLDG), 419 to 465 (FLYA…VLSG), 467 to 512 (LYAI…VFNN), 514 to 559 (IYAV…VVNG), and 560 to 606 (QLYA…VMRA).

It functions in the pathway protein modification; protein ubiquitination. Functionally, probable substrate-specific adapter of an E3 ubiquitin-protein ligase complex which mediates the ubiquitination and subsequent proteasomal degradation of target proteins. May have a role in synapse differentiation and growth. The polypeptide is Kelch-like protein diablo (Drosophila mojavensis (Fruit fly)).